A 543-amino-acid chain; its full sequence is Protein DETOXIFICATION 47, chloroplastic (543 aa).

The transit peptide at 1-30 directs the protein to the chloroplast; sequence MLIKSQRLTLFSPLLSKTRRIPVNSHQTLV. The stretch at 55–94 forms a coiled coil; sequence VIRRRIKLERVTRNCVRIDREIDEEEEEEEKERGDLVKQS. Transmembrane regions (helical) follow at residues 107–127, 135–155, 181–201, 228–248, 256–276, 278–298, 319–339, 342–362, 406–426, 443–463, 472–492, and 497–517; these read GPAM…TVVI, LAAL…FMFL, VLLF…RLFG, GLAW…LGMK, ALAA…LFLG, GIAG…YMMM, LWKI…KIAF, FIIY…QVMA, IIGA…PGLF, LLIP…LEGT, FVSS…MFVT, and GLLG…GLYL.

It belongs to the multi antimicrobial extrusion (MATE) (TC 2.A.66.1) family. In terms of tissue distribution, preferentially expressed in the epidermal cells.

Its subcellular location is the plastid. It is found in the chloroplast membrane. In terms of biological role, functions as a multidrug and toxin extrusion transporter in the export of salicylic acid (SA) from the chloroplast to the cytoplasm. Plays an essential function in plant defense via the pathogen-induced salicylic acid (SA) accumulation. Also acts as a key component of the Age-related resistance (ARR) pathway. In Arabidopsis thaliana (Mouse-ear cress), this protein is Protein DETOXIFICATION 47, chloroplastic.